The primary structure comprises 403 residues: SH3 and cysteine-rich domain-containing protein (403 aa).

Residues 1-43 (MIPPSGAREDGVDGLPKETASAEQPPSPASTGSQESKLQKLKR) are disordered. Residues 21–36 (SAEQPPSPASTGSQES) are compositionally biased toward polar residues. The Phorbol-ester/DAG-type zinc finger occupies 108–160 (AHAFQEHIFKKPTFCDVCNHMIVGTNAKHGLRCKACKMSIHHKCMDGLAPQRC). The disordered stretch occupies residues 212–253 (QRTKKSSSGSGSDSPHRTSTSDLVEVPEEADGPGDGYDLRKR). 2 SH3 domains span residues 286–345 (LQMN…RVHQ) and 348–403 (KIFR…LENI).

As to quaternary structure, interacts (via SH3 domains) with CACNA1S. Interacts with CACNA1H. Interacts with CACNA1C.

It is found in the cytoplasm. The protein localises to the cytosol. The protein resides in the cell membrane. It localises to the sarcolemma. Functionally, promotes expression of the ion channel CACNA1H at the cell membrane, and thereby contributes to the regulation of channel activity. Plays a minor and redundant role in promoting the expression of calcium channel CACNA1S at the cell membrane, and thereby contributes to increased channel activity. Slows down the inactivation rate of the calcium channel CACNA1C. The chain is SH3 and cysteine-rich domain-containing protein (STAC) from Bos taurus (Bovine).